The sequence spans 680 residues: tRNA 5-methylaminomethyl-2-thiouridine biosynthesis bifunctional protein MnmC (680 aa).

Positions methionine 1–proline 267 are tRNA (mnm(5)s(2)U34)-methyltransferase. The segment at isoleucine 273–leucine 680 is FAD-dependent cmnm(5)s(2)U34 oxidoreductase.

The protein in the N-terminal section; belongs to the methyltransferase superfamily. tRNA (mnm(5)s(2)U34)-methyltransferase family. It in the C-terminal section; belongs to the DAO family. The cofactor is FAD.

Its subcellular location is the cytoplasm. It carries out the reaction 5-aminomethyl-2-thiouridine(34) in tRNA + S-adenosyl-L-methionine = 5-methylaminomethyl-2-thiouridine(34) in tRNA + S-adenosyl-L-homocysteine + H(+). Functionally, catalyzes the last two steps in the biosynthesis of 5-methylaminomethyl-2-thiouridine (mnm(5)s(2)U) at the wobble position (U34) in tRNA. Catalyzes the FAD-dependent demodification of cmnm(5)s(2)U34 to nm(5)s(2)U34, followed by the transfer of a methyl group from S-adenosyl-L-methionine to nm(5)s(2)U34, to form mnm(5)s(2)U34. The protein is tRNA 5-methylaminomethyl-2-thiouridine biosynthesis bifunctional protein MnmC of Shewanella sp. (strain W3-18-1).